The sequence spans 1131 residues: DNA polymerase II large subunit (1131 aa).

Belongs to the archaeal DNA polymerase II family. As to quaternary structure, heterodimer of a large subunit and a small subunit.

The catalysed reaction is DNA(n) + a 2'-deoxyribonucleoside 5'-triphosphate = DNA(n+1) + diphosphate. The enzyme catalyses Exonucleolytic cleavage in the 3'- to 5'-direction to yield nucleoside 5'-phosphates.. Functionally, possesses two activities: a DNA synthesis (polymerase) and an exonucleolytic activity that degrades single-stranded DNA in the 3'- to 5'-direction. Has a template-primer preference which is characteristic of a replicative DNA polymerase. The sequence is that of DNA polymerase II large subunit from Methanococcus maripaludis (strain C7 / ATCC BAA-1331).